The following is a 282-amino-acid chain: Protein OS-9 homolog (282 aa).

The first 23 residues, 1–23, serve as a signal peptide directing secretion; sequence MRITQILLCLVIVALSSSSHVWS. Asn94 carries an N-linked (GlcNAc...) asparagine glycan. The 120-residue stretch at 120–239 folds into the MRH domain; sequence EKCLFRQEGW…TVQCPTLCKH (120 aa). Cys122 and Cys135 are joined by a disulfide. Residues Trp129, Trp130, and Gln142 each contribute to the a mannooligosaccharide derivative site. Asn169 and Asn190 each carry an N-linked (GlcNAc...) asparagine glycan. Intrachain disulfides connect Cys194/Cys225 and Cys209/Cys237. Positions 195, 201, 221, and 227 each coordinate a mannooligosaccharide derivative. A compositionally biased stretch (basic and acidic residues) spans 262-276; that stretch reads DATRNKEEQAVDESP. The disordered stretch occupies residues 262 to 282; it reads DATRNKEEQAVDESPKMIADS.

The protein belongs to the OS-9 family. As to quaternary structure, interacts with HRD3A.

It is found in the endoplasmic reticulum. Lectin which functions in endoplasmic reticulum (ER) quality control and ER-associated degradation (ERAD). May bind terminally misfolded non-glycosylated proteins as well as improperly folded glycoproteins, retain them in the ER, and possibly transfer them to the ubiquitination machinery and promote their degradation. Targets the misfolded LRR receptor kinase BRI1 and the misfolded receptor-like kinase EFR. The chain is Protein OS-9 homolog from Arabidopsis thaliana (Mouse-ear cress).